A 964-amino-acid polypeptide reads, in one-letter code: SKI family transcriptional corepressor 1 (964 aa).

Disordered regions lie at residues 45 to 72 (TQLG…SSAL), 278 to 365 (RTFS…GGSA), 414 to 452 (AGEP…PGPG), 525 to 587 (AGGG…RKSS), 610 to 766 (REAY…GPAA), and 793 to 842 (YLCT…EDGL). Positions 283–310 (QGGGGGGANSGSGGAGKGGAGGGGGPGC) are enriched in gly residues. The span at 345–355 (ALGLAAAANGP) shows a compositional bias: low complexity. Composition is skewed to gly residues over residues 356–365 (AGPGGPGGSA) and 417–440 (PKGG…GPGA). The span at 571 to 583 (SLAPLAPPPPPPA) shows a compositional bias: pro residues. Residues 652–661 (DTADEPEVDV) show a composition bias toward acidic residues. Residues 798–808 (ETHEPDKEDNH) are compositionally biased toward basic and acidic residues. Polar residues predominate over residues 823–834 (DQRSVSQPSPAN). The stretch at 857–921 (ENLAREELQK…DTLCNELDQE (65 aa)) forms a coiled coil.

The protein belongs to the SKI family. Interacts with LBX1. Interacts with SMAD1, SMAD2 and SMAD3.

Its subcellular location is the nucleus. Its function is as follows. Inhibits BMP signaling. Acts as a transcriptional corepressor of LBX1. This is SKI family transcriptional corepressor 1 (Skor1) from Rattus norvegicus (Rat).